A 190-amino-acid chain; its full sequence is METQMASPSLGRCSLWLLLLGLLLPSASAQALSYREAVLRAVGQLNEKSSEVNLYRLLELDPPPKDAEDQGARKPVSFRVKETVCPRMSQQPPEQCDFKENGLVKQCVGTVSLDTSNDEFDLNCNELQSVRRLRPRRPRLPRPRPRPRPRPRSLPLPRPQPRRIPRPILLPWRPPRPIPRPQPQPIPRWL.

The signal sequence occupies residues 1-29 (METQMASPSLGRCSLWLLLLGLLLPSASA). Glutamine 30 is modified (pyrrolidone carboxylic acid). Residues 30–130 (QALSYREAVL…DLNCNELQSV (101 aa)) constitute a propeptide that is removed on maturation. 2 cysteine pairs are disulfide-bonded: cysteine 85/cysteine 96 and cysteine 107/cysteine 124. Over residues 133 to 151 (LRPRRPRLPRPRPRPRPRP) the composition is skewed to basic residues. Residues 133 to 190 (LRPRRPRLPRPRPRPRPRPRSLPLPRPQPRRIPRPILLPWRPPRPIPRPQPQPIPRWL) form a disordered region. The segment covering 172 to 190 (WRPPRPIPRPQPQPIPRWL) has biased composition (pro residues).

This sequence belongs to the cathelicidin family.

Its subcellular location is the secreted. Its function is as follows. Exerts, in vitro, a potent antimicrobial activity. Probably due to an impairment of the function of the respiratory chain and of energy-dependent activities in the inner membrane of susceptible microorganisms. This Ovis aries (Sheep) protein is Cathelicidin-3 (CATHL3).